Reading from the N-terminus, the 160-residue chain is Major pollen allergen Bet v 1-A (160 aa).

Brassinolide-binding residues include Lys55, Tyr82, Tyr84, and Asn101.

Belongs to the BetVI family.

The protein localises to the cytoplasm. Functionally, may be a general steroid carrier protein. This chain is Major pollen allergen Bet v 1-A (BETVIA), found in Betula pendula (European white birch).